Consider the following 556-residue polypeptide: 2-isopropylmalate synthase (556 aa).

In terms of domain architecture, Pyruvate carboxyltransferase spans 33–307 (PIWCSSDLRD…NPELDFSDID (275 aa)). 4 residues coordinate Mg(2+): Asp-42, His-246, His-248, and Asn-282. The interval 439 to 556 (ANTPYALISH…SLSQAQAKAA (118 aa)) is regulatory domain.

Belongs to the alpha-IPM synthase/homocitrate synthase family. LeuA type 2 subfamily. As to quaternary structure, homodimer. Mg(2+) serves as cofactor.

It is found in the cytoplasm. The catalysed reaction is 3-methyl-2-oxobutanoate + acetyl-CoA + H2O = (2S)-2-isopropylmalate + CoA + H(+). It functions in the pathway amino-acid biosynthesis; L-leucine biosynthesis; L-leucine from 3-methyl-2-oxobutanoate: step 1/4. In terms of biological role, catalyzes the condensation of the acetyl group of acetyl-CoA with 3-methyl-2-oxobutanoate (2-ketoisovalerate) to form 3-carboxy-3-hydroxy-4-methylpentanoate (2-isopropylmalate). In Pseudomonas syringae pv. tomato (strain ATCC BAA-871 / DC3000), this protein is 2-isopropylmalate synthase.